A 271-amino-acid polypeptide reads, in one-letter code: Pyrroline-5-carboxylate reductase (271 aa).

The protein belongs to the pyrroline-5-carboxylate reductase family.

It is found in the cytoplasm. It catalyses the reaction L-proline + NADP(+) = (S)-1-pyrroline-5-carboxylate + NADPH + 2 H(+). The enzyme catalyses L-proline + NAD(+) = (S)-1-pyrroline-5-carboxylate + NADH + 2 H(+). The protein operates within amino-acid biosynthesis; L-proline biosynthesis; L-proline from L-glutamate 5-semialdehyde: step 1/1. Functionally, catalyzes the reduction of 1-pyrroline-5-carboxylate (PCA) to L-proline. In Haemophilus influenzae (strain ATCC 51907 / DSM 11121 / KW20 / Rd), this protein is Pyrroline-5-carboxylate reductase.